A 273-amino-acid polypeptide reads, in one-letter code: Homeobox protein Nkx-2.2 (273 aa).

2 disordered regions span residues 1-56 and 90-131; these read MSLT…LDAV and LAAG…KRKR. Residues 20-38 show a composition bias toward acidic residues; that stretch reads DTNDEEGSVAEGPEEENEG. Positions 128–187 form a DNA-binding region, homeobox; the sequence is KRKRRVLFSKAQTYELERRFRQQRYLSAPEREHLASLIRLTPTQVKIWFQNHRYKMKRAR.

It belongs to the NK-2 homeobox family. As to quaternary structure, interacts with OLIG2.

It localises to the nucleus. Transcriptional activator involved in the development of insulin-producting beta cells in the endocrine pancreas. May also be involved in specifying diencephalic neuromeric boundaries, and in controlling the expression of genes that play a role in axonal guidance. Binds to elements within the NEUROD1 promoter. In Homo sapiens (Human), this protein is Homeobox protein Nkx-2.2 (NKX2-2).